The sequence spans 304 residues: Glycine--tRNA ligase alpha subunit (304 aa).

Belongs to the class-II aminoacyl-tRNA synthetase family. Tetramer of two alpha and two beta subunits.

It is found in the cytoplasm. It catalyses the reaction tRNA(Gly) + glycine + ATP = glycyl-tRNA(Gly) + AMP + diphosphate. The sequence is that of Glycine--tRNA ligase alpha subunit from Afipia carboxidovorans (strain ATCC 49405 / DSM 1227 / KCTC 32145 / OM5) (Oligotropha carboxidovorans).